A 237-amino-acid polypeptide reads, in one-letter code: Nitrogen fixation regulation protein FixK (237 aa).

The HTH crp-type domain occupies Arg156 to Ala229. The segment at residues Arg189–Thr208 is a DNA-binding region (H-T-H motif).

Functionally, b.japonicum has two FixLJ-dependent FixK homologs that are activators of the transcription of a group of genes involved in anaerobic processes such as denitrification and possibly nitrogen fixation. FixK may bind DNA at the FNR consensus binding site. The chain is Nitrogen fixation regulation protein FixK (fixK) from Bradyrhizobium diazoefficiens (strain JCM 10833 / BCRC 13528 / IAM 13628 / NBRC 14792 / USDA 110).